The sequence spans 115 residues: UPF0295 protein BPUM_0828 (115 aa).

A run of 2 helical transmembrane segments spans residues 13-33 (TFALSLVFVGFLIMYIGVFFK) and 41-61 (FFMLLGVLSIGLSTVVYFWIG).

Belongs to the UPF0295 family.

It is found in the cell membrane. The protein is UPF0295 protein BPUM_0828 of Bacillus pumilus (strain SAFR-032).